The chain runs to 149 residues: Large ribosomal subunit protein bL9 (149 aa).

The protein belongs to the bacterial ribosomal protein bL9 family.

In terms of biological role, binds to the 23S rRNA. This Laribacter hongkongensis (strain HLHK9) protein is Large ribosomal subunit protein bL9.